The chain runs to 954 residues: cGMP-specific 3',5'-cyclic phosphodiesterase alpha (954 aa).

The Cytoplasmic portion of the chain corresponds to 1–259 (MMDTKVDQTI…NTFYSSFPFK (259 aa)). Residues 260 to 280 (LFLHSLYMIFICFIYFVVLYF) traverse the membrane as a helical segment. Topologically, residues 281-296 (MLLKKIYTHPFIFHLS) are extracellular. The helical transmembrane segment at 297–317 (VLKFLFDIIFFLSFILYPLFL) threads the bilayer. Topologically, residues 318-327 (RLKRIDKIIY) are cytoplasmic. Residues 328-348 (SSYISSYIFVCVTFLYSFIIF) traverse the membrane as a helical segment. Residues 349-365 (KCSSYSVKMNSNTYQNN) lie on the Extracellular side of the membrane. Residues 366–386 (FVFQNMLFLLINIIYICIFCF) traverse the membrane as a helical segment. At 387-401 (LKNYMILYSFLYNCR) the chain is on the cytoplasmic side. A helical transmembrane segment spans residues 402 to 422 (FSIFCILFIFLYYYLFFSLDF). The Extracellular segment spans residues 423–432 (YRIIHLPLDN). A helical membrane pass occupies residues 433-453 (FFFPFLCFLFFSFLFIFKIIM). Topologically, residues 454-954 (SLYYEYVYEK…LSKLELIKFE (501 aa)) are cytoplasmic. Positions 586 to 930 (NQEETKSFLS…ERWESHKNDN (345 aa)) constitute a PDEase domain. Catalysis depends on H680, which acts as the Proton donor. 680–684 (HTSLH) is a 3',5'-cyclic GMP binding site. The Zn(2+) site is built by H684, H720, D721, and D832. The 3',5'-cyclic GMP site is built by D721, D832, and Q884. D721 is a binding site for Mg(2+).

This sequence belongs to the cyclic nucleotide phosphodiesterase family. It depends on Zn(2+) as a cofactor. Mg(2+) is required as a cofactor.

The protein localises to the membrane. The catalysed reaction is 3',5'-cyclic GMP + H2O = GMP + H(+). Its pathway is purine metabolism; 3',5'-cyclic GMP degradation; GMP from 3',5'-cyclic GMP: step 1/1. Its activity is regulated as follows. Not inhibited by cAMP. Inhibited by zaprinast. Specifically hydrolyzes the second messenger cGMP, which is a key regulator of many important physiological processes. This chain is cGMP-specific 3',5'-cyclic phosphodiesterase alpha, found in Plasmodium falciparum (isolate 3D7).